The primary structure comprises 543 residues: Chaperonin GroEL (543 aa).

Residues 29-32 (TLGP), 86-90 (DGTTT), G413, 478-480 (DAL), and D494 each bind ATP. A disordered region spans residues 524–543 (PEPEAPAVPAGMPGGMGGMY).

It belongs to the chaperonin (HSP60) family. As to quaternary structure, forms a cylinder of 14 subunits composed of two heptameric rings stacked back-to-back. Interacts with the co-chaperonin GroES.

It localises to the cytoplasm. It carries out the reaction ATP + H2O + a folded polypeptide = ADP + phosphate + an unfolded polypeptide.. In terms of biological role, together with its co-chaperonin GroES, plays an essential role in assisting protein folding. The GroEL-GroES system forms a nano-cage that allows encapsulation of the non-native substrate proteins and provides a physical environment optimized to promote and accelerate protein folding. In Ruminiclostridium cellulolyticum (strain ATCC 35319 / DSM 5812 / JCM 6584 / H10) (Clostridium cellulolyticum), this protein is Chaperonin GroEL.